Reading from the N-terminus, the 89-residue chain is Small ribosomal subunit protein bS16 (89 aa).

It belongs to the bacterial ribosomal protein bS16 family.

The protein is Small ribosomal subunit protein bS16 of Desulforamulus reducens (strain ATCC BAA-1160 / DSM 100696 / MI-1) (Desulfotomaculum reducens).